Reading from the N-terminus, the 208-residue chain is Uracil phosphoribosyltransferase (208 aa).

5-phospho-alpha-D-ribose 1-diphosphate-binding positions include Arg78, Arg103, and Asp130–Ser138. Uracil is bound by residues Ile193 and Gly198–Ala200. Asp199 lines the 5-phospho-alpha-D-ribose 1-diphosphate pocket.

The protein belongs to the UPRTase family. The cofactor is Mg(2+).

The catalysed reaction is UMP + diphosphate = 5-phospho-alpha-D-ribose 1-diphosphate + uracil. The protein operates within pyrimidine metabolism; UMP biosynthesis via salvage pathway; UMP from uracil: step 1/1. Allosterically activated by GTP. Its function is as follows. Catalyzes the conversion of uracil and 5-phospho-alpha-D-ribose 1-diphosphate (PRPP) to UMP and diphosphate. The protein is Uracil phosphoribosyltransferase of Wolinella succinogenes (strain ATCC 29543 / DSM 1740 / CCUG 13145 / JCM 31913 / LMG 7466 / NCTC 11488 / FDC 602W) (Vibrio succinogenes).